The sequence spans 235 residues: Phosphoribosylaminoimidazole-succinocarboxamide synthase (235 aa).

This sequence belongs to the SAICAR synthetase family.

The enzyme catalyses 5-amino-1-(5-phospho-D-ribosyl)imidazole-4-carboxylate + L-aspartate + ATP = (2S)-2-[5-amino-1-(5-phospho-beta-D-ribosyl)imidazole-4-carboxamido]succinate + ADP + phosphate + 2 H(+). It functions in the pathway purine metabolism; IMP biosynthesis via de novo pathway; 5-amino-1-(5-phospho-D-ribosyl)imidazole-4-carboxamide from 5-amino-1-(5-phospho-D-ribosyl)imidazole-4-carboxylate: step 1/2. This Caldanaerobacter subterraneus subsp. tengcongensis (strain DSM 15242 / JCM 11007 / NBRC 100824 / MB4) (Thermoanaerobacter tengcongensis) protein is Phosphoribosylaminoimidazole-succinocarboxamide synthase.